The chain runs to 336 residues: UPF0324 membrane protein spr0034 (336 aa).

8 consecutive transmembrane segments (helical) span residues 65 to 84 (LLQY…QVFA), 91 to 113 (PVIL…FFAL), 118 to 140 (ATLV…APVI), 153 to 175 (VIFF…LHLS), 211 to 233 (SATI…LSYW), 249 to 271 (VFPL…TSLG), 286 to 305 (FLIV…VAMV), and 312 to 334 (ILLG…TLIG).

Belongs to the UPF0324 family.

It is found in the cell membrane. This chain is UPF0324 membrane protein spr0034, found in Streptococcus pneumoniae (strain ATCC BAA-255 / R6).